Reading from the N-terminus, the 402-residue chain is Pyruvate synthase subunit PorA (402 aa).

As to quaternary structure, heterotetramer of one alpha, one beta, one delta and one gamma chain.

It carries out the reaction 2 oxidized [2Fe-2S]-[ferredoxin] + pyruvate + CoA = 2 reduced [2Fe-2S]-[ferredoxin] + acetyl-CoA + CO2 + H(+). The sequence is that of Pyruvate synthase subunit PorA (porA) from Methanosarcina barkeri (strain Fusaro / DSM 804).